The primary structure comprises 305 residues: Coenzyme PQQ synthesis protein B (305 aa).

It belongs to the PqqB family.

It participates in cofactor biosynthesis; pyrroloquinoline quinone biosynthesis. In terms of biological role, may be involved in the transport of PQQ or its precursor to the periplasm. The protein is Coenzyme PQQ synthesis protein B of Methylobacillus flagellatus (strain ATCC 51484 / DSM 6875 / VKM B-1610 / KT).